The primary structure comprises 632 residues: Epsin-3 (632 aa).

Residues Arg-8, Lys-11, Arg-25, Asn-30, Arg-63, and His-73 each coordinate a 1,2-diacyl-sn-glycero-3-phospho-(1D-myo-inositol-4,5-bisphosphate). An ENTH domain is found at 12–144; sequence NIVHNYSEAE…KDEERLRQER (133 aa). Residues 172–214 form a disordered region; it reads YGEDYSRSRGSPSSYNSSSSSPRYTSDLEQARPQTSGEEELQL. Positions 179–196 are enriched in low complexity; the sequence is SRGSPSSYNSSSSSPRYT. Residues Ser-191 and Ser-192 each carry the phosphoserine modification. UIM domains are found at residues 209-228 and 236-255; these read EEELQLQLALAMSREEAEKP and DEDLQLQLALRLSRQEHEKE. The segment at 257-296 is disordered; that stretch reads RSWQGDGSPMANGAGAVVHHQRDREPEREERKEEEKLKTS. Ser-264 carries the phosphoserine modification. The segment covering 276–294 has biased composition (basic and acidic residues); sequence HQRDREPEREERKEEEKLK. 8 repeat units span residues 321–323, 344–346, 371–373, 387–389, 404–406, 524–526, 537–539, and 629–631. The tract at residues 321-406 is 5 X 3 AA repeats of [DE]-P-W; it reads DPWDIPGFRP…KLPSTGADPW (86 aa). 3 disordered regions span residues 326–501, 525–560, and 604–632; these read PGFR…SFLG, PFLTGLSAPSPTNPFGAGEPGRPTLNQMRTGSPALG, and AFAPQPLLPTPSSAGPRPPPPQTGTNPFL. Residues 353 to 371 show a composition bias toward polar residues; sequence TVLSRSQPWDLTPMLSSSE. The tract at residues 524-631 is 3 X 3 AA repeats of N-P-F; sequence NPFLTGLSAP…PPPQTGTNPF (108 aa).

It belongs to the epsin family. As to expression, detected in migrating keratinocytes from wounded skin, but not in differentiating keratinocytes or in normal skin. Detected in chronic wounds, basal cell carcinoma and ulcerative colitis.

It localises to the cytoplasm. The protein resides in the perinuclear region. Its subcellular location is the cytoplasmic vesicle. It is found in the clathrin-coated vesicle. The protein localises to the nucleus. This is Epsin-3 (EPN3) from Homo sapiens (Human).